Consider the following 174-residue polypeptide: Inactive protein RESTRICTED TEV MOVEMENT 1 (174 aa).

The Jacalin-type lectin domain maps to methionine 1–proline 152.

It belongs to the jacalin lectin family. As to quaternary structure, self-interacts. Interacts with RTM3.

The protein resides in the cytoplasm. In terms of biological role, unable to mediate restriction of long-distance movement of the pathogenic tobacco etch virus (TEV) without causing a hypersensitive response or inducing systemic acquired resistance. This chain is Inactive protein RESTRICTED TEV MOVEMENT 1 (RTM1), found in Arabidopsis thaliana (Mouse-ear cress).